Reading from the N-terminus, the 382-residue chain is MQNVMKFHLVIFMLFGSVRLQNPTIERKQCTMSNCFDFSKCSTSKKVYIHPMEKRFEESPQSVIYSKILKHFLESNHYTNDPNEACIFLLGIDTTDRDVRSQNYVKNVNDYIESLDPSVWNNGRNHLIFNFYHGTFPDYDDHNLNFDTGEAMIARASSSENNFIKVFDVSLPLFHENHPYEIKESKSERNDDRIENQRKYLVSFKGKRYVYGIGSGTRNLVHHLHNGDDIVMVTTCKHNNDWQVYQDDRCQRDNDEYDRWEYDELLANSTFCLVPRGRRLGSFRFLETLRSGCVPVVISDSWILPFSETIDWNSAAIVVAERDALSIPELLMSTSRRRVKELRESARNVYDAYLRSIQVISDHVLRIIFKRIDNKIELEDHQ.

A signal peptide spans 1 to 20 (MQNVMKFHLVIFMLFGSVRL). Asn268 carries N-linked (GlcNAc...) asparagine glycosylation.

The protein belongs to the glycosyltransferase 47 family. In terms of assembly, interacts with rib-2.

It localises to the endoplasmic reticulum. It is found in the golgi apparatus. Its function is as follows. Required for the biosynthesis of heparan sulfate by positively regulating N-acetylglucosamine transferase II (GlcNAcT-II) and glucuronyl transferase II (GlcAT-II) activities of glycosyltransferase rib-2. Probably not directly involved in chondroitin sulfate biosynthesis but negatively regulates chondroitin sulfate levels. Maternally required for normal ventral epidermal enclosure and for embryo elongation during the early stages of embryonic development. In addition, involved in the elongation of the pharyngeal isthmus and in the organization of the actin cytoskeleton in the pharyngeal muscles during the later stages embryonic development. In adults, regulates egg-laying and the normal morphogenesis of the vulva. Also involved in the directed migration of hermaphrodite-specific neurons. The polypeptide is Exostosin-1 homolog (rib-1) (Caenorhabditis elegans).